Consider the following 461-residue polypeptide: Kynureninase (461 aa).

Pyridoxal 5'-phosphate-binding positions include Leu-114, Thr-115, 142–145, Asp-228, His-231, and Tyr-253; that span reads FPSD. Lys-254 is subject to N6-(pyridoxal phosphate)lysine. The pyridoxal 5'-phosphate site is built by Trp-288 and Asn-316.

The protein belongs to the kynureninase family. As to quaternary structure, homodimer. Pyridoxal 5'-phosphate serves as cofactor.

It is found in the cytoplasm. It catalyses the reaction L-kynurenine + H2O = anthranilate + L-alanine + H(+). The enzyme catalyses 3-hydroxy-L-kynurenine + H2O = 3-hydroxyanthranilate + L-alanine + H(+). Its pathway is amino-acid degradation; L-kynurenine degradation; L-alanine and anthranilate from L-kynurenine: step 1/1. The protein operates within cofactor biosynthesis; NAD(+) biosynthesis; quinolinate from L-kynurenine: step 2/3. Functionally, catalyzes the cleavage of L-kynurenine (L-Kyn) and L-3-hydroxykynurenine (L-3OHKyn) into anthranilic acid (AA) and 3-hydroxyanthranilic acid (3-OHAA), respectively. This chain is Kynureninase, found in Lodderomyces elongisporus (strain ATCC 11503 / CBS 2605 / JCM 1781 / NBRC 1676 / NRRL YB-4239) (Yeast).